A 471-amino-acid polypeptide reads, in one-letter code: Mixed lineage kinase domain-like protein (471 aa).

Residues 1-149 (MENLKHIITL…DADEDRRAFQ (149 aa)) form an N-terminal bundle and brace (NBB); mediates INSP6 binding region. Residues 55 to 84 (SEKLTTAMNRFKAALEEANGEIEKFSNRSN) adopt a coiled-coil conformation. Residue serine 125 is modified to Phosphoserine. A coiled-coil region spans residues 139–180 (QDADEDRRAFQMLRRDNEKIEASLRRLEINMKEIKETLRQYL). The Protein kinase domain occupies 194-469 (KEIKKEQLSG…DEILKKLSTF (276 aa)). ATP contacts are provided by residues 209 to 217 (LRENEVSTL) and lysine 230. The residue at position 357 (threonine 357) is a Phosphothreonine; by RIPK3. Phosphoserine; by RIPK3 is present on residues serine 358 and serine 360.

Belongs to the protein kinase superfamily. As to quaternary structure, homooligomer. Homotrimer; forms homotrimers on necroptosis induction. Upon TNF-induced necrosis, forms in complex with PGAM5, RIPK1 and RIPK3. Within this complex, may play a role in the proper targeting of RIPK1-RIPK3 to its downstream effector PGAM5. Interacts with RIPK3; the interaction is direct and promotes its phosphorylation and subsequent activation. Phosphorylation by RIPK3 induces a conformational switch that is required for necroptosis. It also induces homotrimerization and localization to the plasma membrane.

It is found in the cytoplasm. It localises to the cell membrane. Its subcellular location is the nucleus. With respect to regulation, activated via binding to highly phosphorylated inositol phosphates such as inositolhexakisphosphate (InsP6) which mediates the release of an N-terminal auto-inhibitory region. Activation requires not only RIPK3-dependent phosphorylation but also binding to highly phosphorylated inositol phosphates. Inhibited by necrosulfonamide, a specific inhibitor of necroptosis that targets Cys-86. Functionally, pseudokinase that plays a key role in TNF-induced necroptosis, a programmed cell death process. Does not have protein kinase activity. Activated following phosphorylation by RIPK3, leading to homotrimerization, localization to the plasma membrane and execution of programmed necrosis characterized by calcium influx and plasma membrane damage. In addition to TNF-induced necroptosis, necroptosis can also take place in the nucleus in response to orthomyxoviruses infection: following activation by ZBP1, MLKL is phosphorylated by RIPK3 in the nucleus, triggering disruption of the nuclear envelope and leakage of cellular DNA into the cytosol.following ZBP1 activation, which senses double-stranded Z-RNA structures, nuclear RIPK3 catalyzes phosphorylation and activation of MLKL, promoting disruption of the nuclear envelope and leakage of cellular DNA into the cytosol. Binds to highly phosphorylated inositol phosphates such as inositolhexakisphosphate (InsP6) which is essential for its necroptotic function. The protein is Mixed lineage kinase domain-like protein of Homo sapiens (Human).